A 171-amino-acid chain; its full sequence is Thioredoxin-2 (171 aa).

The 129-residue stretch at 41–169 folds into the Thioredoxin domain; sequence AFNASPSTSQ…LQALISANHP (129 aa). A disulfide bridge connects residues Cys-95 and Cys-98.

The protein belongs to the thioredoxin family.

The protein localises to the cytoplasm. Its subcellular location is the vacuole. Functionally, thioredoxin involved in responses to oxidative and cell wall stresses. Plays an important role in appressorium formation on hyphal tips. TRX2 may affect invasive growth via the MST11-MST7-PMK1 pathway since it is required for the proper folding or dimerization of MAPKK MST7. The polypeptide is Thioredoxin-2 (Pyricularia oryzae (strain 70-15 / ATCC MYA-4617 / FGSC 8958) (Rice blast fungus)).